A 96-amino-acid chain; its full sequence is Co-chaperonin GroES (96 aa).

This sequence belongs to the GroES chaperonin family. Heptamer of 7 subunits arranged in a ring. Interacts with the chaperonin GroEL.

It localises to the cytoplasm. Functionally, together with the chaperonin GroEL, plays an essential role in assisting protein folding. The GroEL-GroES system forms a nano-cage that allows encapsulation of the non-native substrate proteins and provides a physical environment optimized to promote and accelerate protein folding. GroES binds to the apical surface of the GroEL ring, thereby capping the opening of the GroEL channel. This Shewanella sediminis (strain HAW-EB3) protein is Co-chaperonin GroES.